A 207-amino-acid chain; its full sequence is Small ribosomal subunit protein uS4A (207 aa).

One can recognise an S4 RNA-binding domain in the interval 98-163 (TRLDNLVYRL…SPKFKELKEN (66 aa)).

It belongs to the universal ribosomal protein uS4 family. As to quaternary structure, part of the 30S ribosomal subunit. Contacts protein S5. The interaction surface between S4 and S5 is involved in control of translational fidelity.

In terms of biological role, one of the primary rRNA binding proteins, it binds directly to 16S rRNA where it nucleates assembly of the body of the 30S subunit. Functionally, with S5 and S12 plays an important role in translational accuracy. The chain is Small ribosomal subunit protein uS4A from Alkaliphilus metalliredigens (strain QYMF).